Here is a 431-residue protein sequence, read N- to C-terminus: GDP-L-galactose phosphorylase 2 (431 aa).

His-235 serves as the catalytic Tele-GMP-histidine intermediate. Residues Glu-398–Glu-407 are compositionally biased toward acidic residues. Residues Glu-398–Thr-417 form a disordered region.

This sequence belongs to the GDPGP1 family. As to quaternary structure, interacts with TLP1. In terms of tissue distribution, expressed in leaves, stems, roots, flowers and siliques.

The protein localises to the cytoplasm. It localises to the nucleus. It carries out the reaction GDP-beta-L-galactose + phosphate = beta-L-galactose 1-phosphate + GDP + H(+). Its pathway is cofactor biosynthesis; L-ascorbate biosynthesis via GDP-alpha-D-mannose pathway; L-ascorbate from GDP-alpha-D-mannose: step 2/5. Its function is as follows. Catalyzes a reaction of the Smirnoff-Wheeler pathway, the major route to ascorbate biosynthesis in plants. Acts as a phosphorylase rather than as a transferase. Uses preferentially GDP-L-galactose and GDP-D-glucose as substrates. Lower activity with GDP-L-fucose, very low activity with GDP-D-mannose, and no activity with UDP-D-glucose, UDP-D-galactose or ADP-D-glucose. Highly specific for inorganic phosphate as the guanylyl acceptor. The chain is GDP-L-galactose phosphorylase 2 (VTC5) from Arabidopsis thaliana (Mouse-ear cress).